The primary structure comprises 474 residues: tRNA (guanine(37)-N(1))-methyltransferase (474 aa).

S-adenosyl-L-methionine is bound by residues histidine 234, 274 to 275, 303 to 304, and asparagine 345; these read DL and DA. The span at 452 to 464 shows a compositional bias: acidic residues; the sequence is EPEAQCESEEAEE. The interval 452–474 is disordered; that stretch reads EPEAQCESEEAEEPSSKRIKVDT. Over residues 465–474 the composition is skewed to basic and acidic residues; that stretch reads PSSKRIKVDT.

The protein belongs to the class I-like SAM-binding methyltransferase superfamily. TRM5/TYW2 family. In terms of assembly, monomer.

It localises to the mitochondrion matrix. Its subcellular location is the nucleus. The protein resides in the cytoplasm. The catalysed reaction is guanosine(37) in tRNA + S-adenosyl-L-methionine = N(1)-methylguanosine(37) in tRNA + S-adenosyl-L-homocysteine + H(+). In terms of biological role, specifically methylates the N1 position of guanosine-37 in various cytoplasmic and mitochondrial tRNAs. Methylation is not dependent on the nature of the nucleoside 5' of the target nucleoside. This is the first step in the biosynthesis of wybutosine (yW), a modified base adjacent to the anticodon of tRNAs and required for accurate decoding. The chain is tRNA (guanine(37)-N(1))-methyltransferase from Caenorhabditis elegans.